The chain runs to 523 residues: DELLA protein RGL3 (523 aa).

A disordered region spans residues 1–28 (MKRSHQETSVEEEAPSMVEKLENGCGGG). The short motif at 34–38 (DEFLA) is the DELLA motif element. The short motif at 56 to 60 (LEQLE) is the LEXLE motif element. A VHYNP motif motif is present at residues 78–82 (VHYNP). In terms of domain architecture, GRAS spans 148–516 (VLIEETGVRL…KPLIAASAWK (369 aa)). The leucine repeat I (LRI) stretch occupies residues 155-209 (VRLVQALVACAEAVQLENLSLADALVKRVGLLAASQAGAMGKVATYFAEALARRI). The interval 228 to 293 (QMNFYDSCPY…GGPPSFRLTG (66 aa)) is VHIID. Positions 259–263 (VHVID) match the VHIID motif. The leucine repeat II (LRII) stretch occupies residues 305 to 337 (ELGWKLAQLAQAIGVEFKFNGLTTERLSDLEPD). Positions 348–437 (LVVNSVFELH…EVYLGRQILN (90 aa)) are PFYRE. An LXXLL motif motif is present at residues 356–360 (LHPVL). The interval 440-516 (ATEGSDRIER…KPLIAASAWK (77 aa)) is SAW.

This sequence belongs to the GRAS family. DELLA subfamily. Interacts directly with the GID2/SLY1 component of the SCF(GID2) complex, suggesting that it may be ubiquitinated. Interacts (via N-terminus) with GID1A, GID1B and GID1B (via N-terminus). Interacts with the BOI proteins BOI, BRG1, BRG2 and BRG3. Post-translationally, phosphorylated. In terms of processing, may be ubiquitinated. Expressed at very low level. Mainly expressed in germinating seeds and flowers and siliques. Not expressed in other tissues.

The protein resides in the nucleus. Probable transcriptional regulator that acts as a repressor of the gibberellin (GA) signaling pathway. No effect of the BOI proteins on its stability. Probably acts by participating in large multiprotein complexes that repress transcription of GA-inducible genes. Its activity may be regulated by phytohormones such as auxin and ethylene. This Arabidopsis thaliana (Mouse-ear cress) protein is DELLA protein RGL3 (RGL3).